An 88-amino-acid polypeptide reads, in one-letter code: Potassium channel toxin MeuTXKbeta3-meucin-24 (88 aa).

An N-terminal signal peptide occupies residues 1-22; it reads MMKQQFFLFLAVIVMISSVIEA. The BetaSPN-type CS-alpha/beta domain maps to 55–88; it reads EYACPVIEKWCEDHCQAKNAIGRCENTECKCLSK. Intrachain disulfides connect C58–C78, C65–C83, and C69–C85.

The protein belongs to the long chain scorpion toxin family. Class 2 subfamily. As to expression, expressed by the venom gland.

It is found in the secreted. Functionally, inhibits voltage-gated potassium channels. In terms of biological role, the synthetic meucin-24 inhibits the development of P.berghei ookinetes, kills intraerythrocytic P.falciparum, and is cytotoxic to the Drosophila S2 cells at micromolar concentrations. No antibacterial, antifungal and hemolytic activities have been found at micromolar concentrations. This Mesobuthus eupeus (Lesser Asian scorpion) protein is Potassium channel toxin MeuTXKbeta3-meucin-24.